Reading from the N-terminus, the 370-residue chain is High affinity iron permease ftrA (370 aa).

A run of 7 helical transmembrane segments spans residues V5–V25, V52–G72, L88–L108, A148–I168, A179–Y199, S206–F226, and Y293–M313. Residues R335 to V370 are disordered. A compositionally biased stretch (polar residues) spans T351 to S360.

It belongs to the oxidase-dependent Fe transporter (OFeT) (TC 9.A.10.1) family.

It is found in the cell membrane. Functionally, high affinity iron permease; part of the reductive iron assimilatory system (RIA), a siderophore-independent high affinity iron uptake mechanism. In Aspergillus fumigatus (strain ATCC MYA-4609 / CBS 101355 / FGSC A1100 / Af293) (Neosartorya fumigata), this protein is High affinity iron permease ftrA.